Consider the following 380-residue polypeptide: cAMP-dependent protein kinase type I-alpha regulatory subunit (380 aa).

The residue at position 1 (M1) is an N-acetylmethionine. A2 bears the N-acetylalanine; in cAMP-dependent protein kinase type I-alpha regulatory subunit, N-terminally processed mark. The segment at 2–135 (ASGSTASEEE…ALAKAIEKNV (134 aa)) is dimerization and phosphorylation. Phosphoserine occurs at positions 3, 76, and 82. The interval 64 to 96 (IQNLQKASARADSREDEISPPPPNPVVKGRRRR) is disordered. The short motif at 95-99 (RRGAI) is the Pseudophosphorylation motif element. Phosphoserine is present on S100. 3',5'-cyclic AMP-binding positions include 136-253 (LFSH…SKVS), E201, R210, 254-380 (ILES…SLSV), E325, and R334. Phosphoserine is present on S257.

It belongs to the cAMP-dependent kinase regulatory chain family. As to quaternary structure, the inactive holoenzyme is composed of two regulatory chains and two catalytic chains. Activation by cAMP releases the two active catalytic monomers and the regulatory dimer. Interacts with PRKACA and PRKACB. PRKAR1A also interacts with RFC2; the complex may be involved in cell survival. Interacts with AKAP4. Interacts with RARA; the interaction occurs in the presence of cAMP or FSH and regulates RARA transcriptional activity. Interacts with the phosphorylated form of PJA2. Interacts with CBFA2T3. Interacts with PRKX; regulates this cAMP-dependent protein kinase. Interacts with smAKAP; this interaction may target PRKAR1A to the plasma membrane. Interacts with AICDA. The pseudophosphorylation site binds to the substrate-binding region of the catalytic chain, resulting in the inhibition of its activity. Four types of regulatory chains are found: I-alpha, I-beta, II-alpha, and II-beta. Their expression varies among tissues and is in some cases constitutive and in others inducible.

The protein localises to the cell membrane. Regulatory subunit of the cAMP-dependent protein kinases involved in cAMP signaling in cells. The protein is cAMP-dependent protein kinase type I-alpha regulatory subunit (PRKAR1A) of Sus scrofa (Pig).